We begin with the raw amino-acid sequence, 134 residues long: Transcription antitermination protein NusB (134 aa).

The protein belongs to the NusB family.

Its function is as follows. Involved in transcription antitermination. Required for transcription of ribosomal RNA (rRNA) genes. Binds specifically to the boxA antiterminator sequence of the ribosomal RNA (rrn) operons. In Shewanella sp. (strain MR-4), this protein is Transcription antitermination protein NusB.